A 296-amino-acid chain; its full sequence is Light-independent protochlorophyllide reductase iron-sulfur ATP-binding protein (296 aa).

ATP contacts are provided by residues 39 to 44 and K68; that span reads GIGKST. S43 lines the Mg(2+) pocket. [4Fe-4S] cluster contacts are provided by C124 and C158. An ATP-binding site is contributed by 209–210; sequence NR.

The protein belongs to the NifH/BchL/ChlL family. Homodimer. Protochlorophyllide reductase is composed of three subunits; ChlL, ChlN and ChlB. Requires [4Fe-4S] cluster as cofactor.

It carries out the reaction chlorophyllide a + oxidized 2[4Fe-4S]-[ferredoxin] + 2 ADP + 2 phosphate = protochlorophyllide a + reduced 2[4Fe-4S]-[ferredoxin] + 2 ATP + 2 H2O. It functions in the pathway porphyrin-containing compound metabolism; chlorophyll biosynthesis (light-independent). Its function is as follows. Component of the dark-operative protochlorophyllide reductase (DPOR) that uses Mg-ATP and reduced ferredoxin to reduce ring D of protochlorophyllide (Pchlide) to form chlorophyllide a (Chlide). This reaction is light-independent. The L component serves as a unique electron donor to the NB-component of the complex, and binds Mg-ATP. The sequence is that of Light-independent protochlorophyllide reductase iron-sulfur ATP-binding protein from Prochlorococcus marinus (strain MIT 9313).